A 218-amino-acid chain; its full sequence is Acetyl- and succinyl-CoA transferase MT0822 (218 aa).

Residues 32 to 188 (DTILEGVHDP…EALLFRLTRD (157 aa)) form the N-acetyltransferase domain. Substrate is bound by residues Q94, 109–113 (SGSWL), 119–124 (GHGYGT), 145–151 (SRSFVDN), and R160.

As to quaternary structure, dimer of dimers.

It catalyses the reaction L-lysyl-[protein] + acetyl-CoA = N(6)-acetyl-L-lysyl-[protein] + CoA + H(+). It carries out the reaction succinyl-CoA + L-lysyl-[protein] = N(6)-succinyl-L-lysyl-[protein] + CoA + H(+). Functionally, acetylates and succinylates nucleoid-associated, DNA-binding protein HupB. This chain is Acetyl- and succinyl-CoA transferase MT0822, found in Mycobacterium tuberculosis (strain CDC 1551 / Oshkosh).